Consider the following 321-residue polypeptide: Methionyl-tRNA formyltransferase (321 aa).

111-114 contacts (6S)-5,6,7,8-tetrahydrofolate; sequence GLLP.

It belongs to the Fmt family.

The enzyme catalyses L-methionyl-tRNA(fMet) + (6R)-10-formyltetrahydrofolate = N-formyl-L-methionyl-tRNA(fMet) + (6S)-5,6,7,8-tetrahydrofolate + H(+). Functionally, attaches a formyl group to the free amino group of methionyl-tRNA(fMet). The formyl group appears to play a dual role in the initiator identity of N-formylmethionyl-tRNA by promoting its recognition by IF2 and preventing the misappropriation of this tRNA by the elongation apparatus. In Chlamydia pneumoniae (Chlamydophila pneumoniae), this protein is Methionyl-tRNA formyltransferase.